Here is a 367-residue protein sequence, read N- to C-terminus: D-alanine--D-alanine ligase (367 aa).

In terms of domain architecture, ATP-grasp spans 141–346; the sequence is KNLFAQAGLR…YPELIERLIA (206 aa). 174–229 contacts ATP; it reads ERELGYPCFVKPANAGSSVGISKCKQRGDLKAAFIEAFQYDRKIIIEEAIVGREIE. Residues D300, E313, and N315 each coordinate Mg(2+).

The protein belongs to the D-alanine--D-alanine ligase family. Mg(2+) is required as a cofactor. It depends on Mn(2+) as a cofactor.

The protein resides in the cytoplasm. It carries out the reaction 2 D-alanine + ATP = D-alanyl-D-alanine + ADP + phosphate + H(+). Its pathway is cell wall biogenesis; peptidoglycan biosynthesis. Its function is as follows. Cell wall formation. This is D-alanine--D-alanine ligase from Geobacillus kaustophilus (strain HTA426).